The primary structure comprises 311 residues: Ribosomal RNA small subunit methyltransferase A (311 aa).

The S-adenosyl-L-methionine site is built by N29, V31, G56, E77, D107, and N126.

It belongs to the class I-like SAM-binding methyltransferase superfamily. rRNA adenine N(6)-methyltransferase family. RsmA subfamily.

The protein resides in the cytoplasm. The catalysed reaction is adenosine(1518)/adenosine(1519) in 16S rRNA + 4 S-adenosyl-L-methionine = N(6)-dimethyladenosine(1518)/N(6)-dimethyladenosine(1519) in 16S rRNA + 4 S-adenosyl-L-homocysteine + 4 H(+). Specifically dimethylates two adjacent adenosines (A1518 and A1519) in the loop of a conserved hairpin near the 3'-end of 16S rRNA in the 30S particle. May play a critical role in biogenesis of 30S subunits. This Mycolicibacterium vanbaalenii (strain DSM 7251 / JCM 13017 / BCRC 16820 / KCTC 9966 / NRRL B-24157 / PYR-1) (Mycobacterium vanbaalenii) protein is Ribosomal RNA small subunit methyltransferase A.